The sequence spans 1157 residues: uncharacterized protein (1157 aa).

Residues 1-10 (MDPHWKRHDS) are compositionally biased toward basic and acidic residues. Disordered regions lie at residues 1 to 35 (MDPHWKRHDSSNIPTQPSPSASPKSNKPSSAQRFG), 159 to 233 (QTTP…SVEP), and 478 to 498 (KNQSSHRRNSSTSSGETGKGP). Composition is skewed to low complexity over residues 18 to 31 (SPSASPKSNKPSSA) and 181 to 197 (SAGTDPFSPVSPSNPNF). Over residues 208–228 (QEWQQSPLESPLSMHSLQESL) the composition is skewed to polar residues. The 74-residue stretch at 501 to 574 (VWFKPSDKRI…KVEYKAILHD (74 aa)) folds into the CSD2 domain. Residues 608 to 921 (LRDKLTFMIG…ICVQRQLREA (314 aa)) enclose the RNB domain. Positions 973-1030 (GLVKHKAFVLAVDQEYIDIVIYEFGLERRISLDLLPLSNCDFNEQKHELYLSWRTNAS) constitute a DIS3L2 C-terminal domain. Residues 1084-1113 (YSKARGNDSTSKTAKSSSGNQDISGDGKLH) are disordered. Polar residues predominate over residues 1090 to 1106 (NDSTSKTAKSSSGNQDI).

Belongs to the RNR ribonuclease family.

The protein resides in the cytoplasm. This is an uncharacterized protein from Schizosaccharomyces pombe (strain 972 / ATCC 24843) (Fission yeast).